We begin with the raw amino-acid sequence, 901 residues long: Core protein VP3 (901 aa).

The protein belongs to the orbivirus VP3 family.

Its subcellular location is the virion. Functionally, the VP3 protein is one of the five proteins (with VP1, VP4, VP6 and VP7) which form the inner capsid of the virus. In Bluetongue virus 10 (isolate USA) (BTV 10), this protein is Core protein VP3 (Segment-3).